The chain runs to 280 residues: Pantothenate synthetase (280 aa).

31-38 provides a ligand contact to ATP; sequence MGNLHAGH. H38 functions as the Proton donor in the catalytic mechanism. Q62 lines the (R)-pantoate pocket. Residue Q62 coordinates beta-alanine. ATP is bound at residue 150–153; the sequence is GKKD. Position 156 (Q156) interacts with (R)-pantoate. ATP is bound by residues V179 and 187–190; that span reads MSSR.

Belongs to the pantothenate synthetase family. As to quaternary structure, homodimer.

The protein resides in the cytoplasm. The catalysed reaction is (R)-pantoate + beta-alanine + ATP = (R)-pantothenate + AMP + diphosphate + H(+). It participates in cofactor biosynthesis; (R)-pantothenate biosynthesis; (R)-pantothenate from (R)-pantoate and beta-alanine: step 1/1. Catalyzes the condensation of pantoate with beta-alanine in an ATP-dependent reaction via a pantoyl-adenylate intermediate. This is Pantothenate synthetase from Xanthomonas euvesicatoria pv. vesicatoria (strain 85-10) (Xanthomonas campestris pv. vesicatoria).